Here is an 80-residue protein sequence, read N- to C-terminus: Small ribosomal subunit protein bS16 (80 aa).

Belongs to the bacterial ribosomal protein bS16 family.

The sequence is that of Small ribosomal subunit protein bS16 from Nitrosococcus oceani (strain ATCC 19707 / BCRC 17464 / JCM 30415 / NCIMB 11848 / C-107).